The primary structure comprises 172 residues: Translation initiation factor IF-3 (172 aa).

This sequence belongs to the IF-3 family. Monomer.

Its subcellular location is the cytoplasm. Functionally, IF-3 binds to the 30S ribosomal subunit and shifts the equilibrium between 70S ribosomes and their 50S and 30S subunits in favor of the free subunits, thus enhancing the availability of 30S subunits on which protein synthesis initiation begins. This Bartonella henselae (strain ATCC 49882 / DSM 28221 / CCUG 30454 / Houston 1) (Rochalimaea henselae) protein is Translation initiation factor IF-3.